Consider the following 62-residue polypeptide: Photosystem II reaction center protein Z (62 aa).

A run of 2 helical transmembrane segments spans residues 8–28 (SVFA…VALA) and 41–61 (FSGV…NSFI).

Belongs to the PsbZ family. In terms of assembly, PSII is composed of 1 copy each of membrane proteins PsbA, PsbB, PsbC, PsbD, PsbE, PsbF, PsbH, PsbI, PsbJ, PsbK, PsbL, PsbM, PsbT, PsbY, PsbZ, Psb30/Ycf12, at least 3 peripheral proteins of the oxygen-evolving complex and a large number of cofactors. It forms dimeric complexes.

The protein resides in the plastid. The protein localises to the chloroplast thylakoid membrane. Its function is as follows. May control the interaction of photosystem II (PSII) cores with the light-harvesting antenna, regulates electron flow through the 2 photosystem reaction centers. PSII is a light-driven water plastoquinone oxidoreductase, using light energy to abstract electrons from H(2)O, generating a proton gradient subsequently used for ATP formation. The sequence is that of Photosystem II reaction center protein Z from Cryptomeria japonica (Japanese cedar).